The primary structure comprises 1094 residues: RecBCD enzyme subunit RecB (1094 aa).

Residues 1-326 enclose the UvrD-like helicase ATP-binding domain; that stretch reads MDRFELLGPL…YTLGVNWRSD (326 aa). Residues 1–713 are DNA-binding and helicase activity, interacts with RecC; that stretch reads MDRFELLGPL…LLRGRRPGQS (713 aa). 21 to 28 contributes to the ATP binding site; sequence ASAGTGKT. A UvrD-like helicase C-terminal domain is found at 357-613; it reads AGHRLASAPR…QIMTVFVAKG (257 aa). The nuclease activity, interacts with RecD and RecA stretch occupies residues 775–1094; that stretch reads TWRRTSYSDL…DLLDRGRLQS (320 aa). Positions 838, 975, and 989 each coordinate Mg(2+). The active-site For nuclease activity is aspartate 989.

This sequence belongs to the helicase family. UvrD subfamily. In terms of assembly, heterotrimer of RecB, RecC and RecD. All subunits contribute to DNA-binding. Interacts with RecA. Mg(2+) serves as cofactor.

It carries out the reaction Exonucleolytic cleavage (in the presence of ATP) in either 5'- to 3'- or 3'- to 5'-direction to yield 5'-phosphooligonucleotides.. The enzyme catalyses Couples ATP hydrolysis with the unwinding of duplex DNA by translocating in the 3'-5' direction.. The catalysed reaction is ATP + H2O = ADP + phosphate + H(+). Functionally, a helicase/nuclease that prepares dsDNA breaks (DSB) for recombinational DNA repair. Binds to DSBs and unwinds DNA via a highly rapid and processive ATP-dependent bidirectional helicase activity. In the holoenzyme this subunit contributes ATPase, 3'-5' helicase, exonuclease activity and loads RecA onto ssDNA. Unlike the case in E.coli, suppresses RecA-dependent homologous recombination, is instead required for single-strand annealing pathway repair of DSB. The protein is RecBCD enzyme subunit RecB of Mycobacterium tuberculosis (strain CDC 1551 / Oshkosh).